We begin with the raw amino-acid sequence, 200 residues long: Phospholipase A2 inhibitor gamma subunit B (200 aa).

A signal peptide spans 1–19 (MKFLLFCCLFGTFLATGMC). Intrachain disulfides connect cysteine 22–cysteine 46, cysteine 25–cysteine 32, cysteine 39–cysteine 67, cysteine 73–cysteine 94, cysteine 95–cysteine 100, cysteine 120–cysteine 145, cysteine 138–cysteine 165, and cysteine 171–cysteine 191. Residue asparagine 31 is glycosylated (N-linked (GlcNAc...) asparagine).

It belongs to the CNF-like-inhibitor family. In terms of assembly, heterodimer of subunit A and subunit B. In terms of processing, N-glycosylated. Expressed by the liver. Not expressed in esophagus, stomach, pancreas, spleen, gall bladder, small intestine, rectum, kidney, trachea, lung, testis and body fat.

The protein localises to the secreted. Functionally, inhibits the enzymatic activity of phospholipase A2 (PA2). The chain is Phospholipase A2 inhibitor gamma subunit B from Elaphe quadrivirgata (Japanese four-lined ratsnake).